Reading from the N-terminus, the 285-residue chain is HTH-type transcriptional regulator MurR (285 aa).

Residues 1-77 (MLYLTKIRNA…MALIGEYSAS (77 aa)) form the HTH rpiR-type domain. Positions 37 to 56 (SRKMAKQLGISQSSIVKFAQ) form a DNA-binding region, H-T-H motif. In terms of domain architecture, SIS spans 128–268 (IIEVISKAPF…FVGLVQLNDV (141 aa)).

Homotetramer.

It functions in the pathway amino-sugar metabolism; N-acetylmuramate degradation [regulation]. In terms of biological role, represses the expression of the murPQ operon involved in the uptake and degradation of N-acetylmuramic acid (MurNAc). Binds to two adjacent inverted repeats within the operator region. MurNAc 6-phosphate, the substrate of MurQ, is the specific inducer that weakens binding of MurR to the operator. The chain is HTH-type transcriptional regulator MurR from Escherichia coli O9:H4 (strain HS).